The following is a 324-amino-acid chain: Glyoxylate/hydroxypyruvate reductase B (324 aa).

Residues Arg-237 and Glu-266 contribute to the active site. Residue His-285 is the Proton donor of the active site.

The protein belongs to the D-isomer specific 2-hydroxyacid dehydrogenase family. GhrB subfamily. In terms of assembly, homodimer.

It is found in the cytoplasm. The catalysed reaction is glycolate + NADP(+) = glyoxylate + NADPH + H(+). It carries out the reaction (R)-glycerate + NAD(+) = 3-hydroxypyruvate + NADH + H(+). The enzyme catalyses (R)-glycerate + NADP(+) = 3-hydroxypyruvate + NADPH + H(+). Catalyzes the NADPH-dependent reduction of glyoxylate and hydroxypyruvate into glycolate and glycerate, respectively. In Salmonella paratyphi A (strain ATCC 9150 / SARB42), this protein is Glyoxylate/hydroxypyruvate reductase B.